Reading from the N-terminus, the 278-residue chain is Orotidine 5'-phosphate decarboxylase (278 aa).

Residue lysine 96 is the Proton donor of the active site.

Belongs to the OMP decarboxylase family. Type 2 subfamily.

The enzyme catalyses orotidine 5'-phosphate + H(+) = UMP + CO2. It participates in pyrimidine metabolism; UMP biosynthesis via de novo pathway; UMP from orotate: step 2/2. This chain is Orotidine 5'-phosphate decarboxylase, found in Salinispora tropica (strain ATCC BAA-916 / DSM 44818 / JCM 13857 / NBRC 105044 / CNB-440).